We begin with the raw amino-acid sequence, 238 residues long: tRNA (guanine-N(1)-)-methyltransferase (238 aa).

Residues Gly108 and 127-132 (LGDFVL) contribute to the S-adenosyl-L-methionine site.

The protein belongs to the RNA methyltransferase TrmD family. In terms of assembly, homodimer.

It is found in the cytoplasm. The enzyme catalyses guanosine(37) in tRNA + S-adenosyl-L-methionine = N(1)-methylguanosine(37) in tRNA + S-adenosyl-L-homocysteine + H(+). Specifically methylates guanosine-37 in various tRNAs. This chain is tRNA (guanine-N(1)-)-methyltransferase, found in Streptococcus uberis (strain ATCC BAA-854 / 0140J).